The primary structure comprises 196 residues: Holliday junction resolvase RecU (196 aa).

The Mg(2+) site is built by Thr-82, Asp-84, Glu-97, and Gln-116.

Belongs to the RecU family. The cofactor is Mg(2+).

The protein localises to the cytoplasm. It catalyses the reaction Endonucleolytic cleavage at a junction such as a reciprocal single-stranded crossover between two homologous DNA duplexes (Holliday junction).. Functionally, endonuclease that resolves Holliday junction intermediates in genetic recombination. Cleaves mobile four-strand junctions by introducing symmetrical nicks in paired strands. Promotes annealing of linear ssDNA with homologous dsDNA. Required for DNA repair, homologous recombination and chromosome segregation. The polypeptide is Holliday junction resolvase RecU (Oceanobacillus iheyensis (strain DSM 14371 / CIP 107618 / JCM 11309 / KCTC 3954 / HTE831)).